We begin with the raw amino-acid sequence, 147 residues long: Leech anti-platelet protein (147 aa).

Residues 1-21 form the signal peptide; it reads MNSFLFSLACSLLVAIPAISA. Positions 21–71 are disordered; sequence AQDEDAGGAGDETSEGEDTTGSDETPSTGGGGDGGNEETITAGNEDCWSKR. Residues 22–41 show a composition bias toward acidic residues; that stretch reads QDEDAGGAGDETSEGEDTTG. Intrachain disulfides connect C67–C145, C92–C117, and C96–C105.

The N-terminus is blocked. Expressed by salivary glands.

The protein localises to the secreted. Functionally, inhibits collagen-stimulated platelet aggregation (IC(50)=60 nM), dense granule release and serotonin release. Does not inhibit platelet aggregation induced by ADP, arachidonic acid, and thrombin. The polypeptide is Leech anti-platelet protein (Haementeria officinalis (Mexican leech)).